A 968-amino-acid chain; its full sequence is RNA polymerase-associated protein RapA (968 aa).

Residues 164–334 (DVGRRHAPRV…FARLRLLDPN (171 aa)) form the Helicase ATP-binding domain. Residue 177-184 (DEVGLGKT) coordinates ATP. Positions 280–283 (DEAH) match the DEAH box motif. Residues 490 to 685 (RVEWLMGYLT…ALKAQLEQGR (196 aa)) form the Helicase C-terminal domain.

Belongs to the SNF2/RAD54 helicase family. RapA subfamily. As to quaternary structure, interacts with the RNAP. Has a higher affinity for the core RNAP than for the holoenzyme. Its ATPase activity is stimulated by binding to RNAP.

In terms of biological role, transcription regulator that activates transcription by stimulating RNA polymerase (RNAP) recycling in case of stress conditions such as supercoiled DNA or high salt concentrations. Probably acts by releasing the RNAP, when it is trapped or immobilized on tightly supercoiled DNA. Does not activate transcription on linear DNA. Probably not involved in DNA repair. The sequence is that of RNA polymerase-associated protein RapA from Salmonella newport (strain SL254).